The chain runs to 239 residues: Ribonuclease 3 (239 aa).

The RNase III domain maps to 12–137 (RAKLEALIGH…LIAAIYLDGG (126 aa)). Residue Glu-50 coordinates Mg(2+). Residue Asp-54 is part of the active site. Residues Asp-123 and Glu-126 each coordinate Mg(2+). Residue Glu-126 is part of the active site. Residues 162–231 (DAKTELQEWS…ATKMLEREGI (70 aa)) enclose the DRBM domain.

The protein belongs to the ribonuclease III family. In terms of assembly, homodimer. Mg(2+) serves as cofactor.

It is found in the cytoplasm. It catalyses the reaction Endonucleolytic cleavage to 5'-phosphomonoester.. In terms of biological role, digests double-stranded RNA. Involved in the processing of primary rRNA transcript to yield the immediate precursors to the large and small rRNAs (23S and 16S). Processes some mRNAs, and tRNAs when they are encoded in the rRNA operon. Processes pre-crRNA and tracrRNA of type II CRISPR loci if present in the organism. This is Ribonuclease 3 from Rhizobium etli (strain ATCC 51251 / DSM 11541 / JCM 21823 / NBRC 15573 / CFN 42).